The primary structure comprises 363 residues: UDP-N-acetylglucosamine--N-acetylmuramyl-(pentapeptide) pyrophosphoryl-undecaprenol N-acetylglucosamine transferase (363 aa).

Residues 10 to 12 (TGG), Asn124, Ser195, Ile248, and Gln293 each bind UDP-N-acetyl-alpha-D-glucosamine.

It belongs to the glycosyltransferase 28 family. MurG subfamily.

It is found in the cell membrane. The enzyme catalyses Mur2Ac(oyl-L-Ala-gamma-D-Glu-L-Lys-D-Ala-D-Ala)-di-trans,octa-cis-undecaprenyl diphosphate + UDP-N-acetyl-alpha-D-glucosamine = beta-D-GlcNAc-(1-&gt;4)-Mur2Ac(oyl-L-Ala-gamma-D-Glu-L-Lys-D-Ala-D-Ala)-di-trans,octa-cis-undecaprenyl diphosphate + UDP + H(+). It functions in the pathway cell wall biogenesis; peptidoglycan biosynthesis. Its function is as follows. Cell wall formation. Catalyzes the transfer of a GlcNAc subunit on undecaprenyl-pyrophosphoryl-MurNAc-pentapeptide (lipid intermediate I) to form undecaprenyl-pyrophosphoryl-MurNAc-(pentapeptide)GlcNAc (lipid intermediate II). The sequence is that of UDP-N-acetylglucosamine--N-acetylmuramyl-(pentapeptide) pyrophosphoryl-undecaprenol N-acetylglucosamine transferase from Lacticaseibacillus casei (strain BL23) (Lactobacillus casei).